A 339-amino-acid chain; its full sequence is Serpentine receptor class r-10 (339 aa).

At 1 to 11 (MSGELWITLVD) the chain is on the extracellular side. A helical transmembrane segment spans residues 12 to 32 (TADIVGVTLTFCVNIVLLGLL). The Cytoplasmic segment spans residues 33–42 (KTRGKNLGTY). The chain crosses the membrane as a helical span at residues 43 to 63 (KYLMAFFSVFSIFYAIIEFIL). Over 64-92 (RPIMHIENTTFFLISRKRFNYSTKLGKIN) the chain is Extracellular. Residues Asn71 and Asn83 are each glycosylated (N-linked (GlcNAc...) asparagine). The chain crosses the membrane as a helical span at residues 93–113 (SAFYCACFATSFVVSGVHFVY). Residues 114 to 131 (RYFATCKPNLLRLFNLPT) are Cytoplasmic-facing. A helical membrane pass occupies residues 132–152 (LLLWPLGCSVPVTMWASVSYF). The Extracellular portion of the chain corresponds to 153–201 (LYPDTEYTEAAVTNVLNNHYNWIKKENVSYIAYVYYQYENGVRHIYLKN). A glycan (N-linked (GlcNAc...) asparagine) is linked at Asn179. Residues 202–222 (LLGCFVHYFVMSMTFVVMFYC) form a helical membrane-spanning segment. Residues 223 to 254 (GYATWKTMNEHKDVSDRTRALQKQLFKALVLQ) are Cytoplasmic-facing. A helical transmembrane segment spans residues 255-275 (TLIPTIFMYAPTGVMFIAPFF). Residues 276–284 (DVNLNANAN) lie on the Extracellular side of the membrane. The chain crosses the membrane as a helical span at residues 285-305 (FIVFCSFLYPGLDPLILILII). At 306–339 (RDFRRTIFNFLCGKKNSVDESRSTTRANLSQVPT) the chain is on the cytoplasmic side.

Belongs to the nematode receptor-like protein str family. In terms of assembly, interacts with odr-4. In terms of tissue distribution, strongly expressed in the sensory cilia of AWA olfactory neurons, and at low levels in the CEP neurons.

It localises to the cell projection. The protein localises to the cilium membrane. In terms of biological role, an odorant receptor which affects chemotaxis to the volatile odorant diacetyl. Specifies AWA neuronal cell fate via the odr-7 pathway. In Caenorhabditis elegans, this protein is Serpentine receptor class r-10.